Here is a 113-residue protein sequence, read N- to C-terminus: U11-theraphotoxin-Hhn1l (113 aa).

An N-terminal signal peptide occupies residues 1 to 21 (MNTGRVTFLVVFLVAVSLGPA). A propeptide spanning residues 22-74 (DKEENPMEMQEKTQQGKNYLNFGENLVVPKLEELKAKLVEKESKKSKNSRQKR) is cleaved from the precursor. 2 cysteine pairs are disulfide-bonded: Cys-82–Cys-95 and Cys-89–Cys-110.

The protein belongs to the neurotoxin 14 (magi-1) family. 01 (HNTX-16) subfamily. Expressed by the venom gland.

The protein localises to the secreted. Its function is as follows. Probable ion channel inhibitor. The sequence is that of U11-theraphotoxin-Hhn1l from Cyriopagopus hainanus (Chinese bird spider).